A 164-amino-acid chain; its full sequence is Large ribosomal subunit protein uL15 (164 aa).

Positions 1-14 are enriched in polar residues; the sequence is MKLNEIQDNPGSSK. Residues 1–35 are disordered; sequence MKLNEIQDNPGSSKSRMRVGRGIGSGKGKTCGRGV. The segment covering 21–35 has biased composition (gly residues); that stretch reads RGIGSGKGKTCGRGV.

The protein belongs to the universal ribosomal protein uL15 family. In terms of assembly, part of the 50S ribosomal subunit.

Binds to the 23S rRNA. The sequence is that of Large ribosomal subunit protein uL15 from Methylocella silvestris (strain DSM 15510 / CIP 108128 / LMG 27833 / NCIMB 13906 / BL2).